The following is a 200-amino-acid chain: Phospholipase A2 inhibitor NAI (200 aa).

The signal sequence occupies residues 1-19; that stretch reads MKSLLFCCLFGTFLATGMC. 8 cysteine pairs are disulfide-bonded: C22-C46, C25-C32, C39-C67, C73-C94, C95-C100, C120-C145, C138-C165, and C171-C191.

Belongs to the CNF-like-inhibitor family. As to quaternary structure, heterotrimer of 2 subunits A and 1 subunit B; non-covalently linked. Expressed by the liver.

It localises to the secreted. Its function is as follows. Inhibits the enzymatic activity of all phospholipase A2 tested, binding with micromole to nanomole affinity. This is Phospholipase A2 inhibitor NAI from Notechis ater (Black tiger snake).